The chain runs to 1019 residues: Exportin-T (1019 aa).

It belongs to the exportin family.

The protein localises to the nucleus. Its subcellular location is the cytoplasm. TRNA nucleus export receptor which facilitates tRNA translocation across the nuclear pore complex. Involved in pre-tRNA splicing, probably by affecting the interaction of pre-tRNA with splicing endonuclease. This is Exportin-T (LOS1) from Chaetomium globosum (strain ATCC 6205 / CBS 148.51 / DSM 1962 / NBRC 6347 / NRRL 1970) (Soil fungus).